The primary structure comprises 777 residues: Dynamin-like protein ARC5 (777 aa).

The 299-residue stretch at 45–343 folds into the Dynamin-type G domain; sequence PFEAPAVLVV…LWKRYKESVP (299 aa). Residues 55 to 62 are G1 motif; sequence GQQTDGKS. 55 to 62 contacts GTP; the sequence is GQQTDGKS. The tract at residues 81 to 83 is G2 motif; that stretch reads KTR. Residues 160–163 form a G3 motif region; it reads DTPG. Residues 160–164 and 231–234 each bind GTP; these read DTPGL and TKLD. Residues 231-234 are G4 motif; the sequence is TKLD. The segment at 265 to 268 is G5 motif; sequence SPFF. Coiled-coil stretches lie at residues 300-320 and 728-765; these read EDIASLEKKLGRLLTKQEKSR and NLRQSLDQKKRSTEIELRRIKRIKEKFRVMNEKLNSHE.

This sequence belongs to the TRAFAC class dynamin-like GTPase superfamily. Dynamin/Fzo/YdjA family. In terms of assembly, forms a homodimer and heterodimers with DRP3A and DRP3B on peroxisomes. Also interacts with FIS1A (but not FIS1B) and PEX11 proteins (PEX11A, PEX11B, PEX11C, PEX11D and PEX11E) on peroxisomes. Interacts with PDV1 and PDV2. Post-translationally, stabilized at the plastid outer envelope membranes (OEMs) in the constriction site when in complex with GTP, but destabilized after conversion of GTP into GDP leading to turnover with a cytosolic pool.

It localises to the cytoplasm. It is found in the plastid. The protein localises to the chloroplast outer membrane. The protein resides in the peroxisome. Its subcellular location is the cytosol. It carries out the reaction GTP + H2O = GDP + phosphate + H(+). Its activity is regulated as follows. GTPase activity is repressed by PDV2 thus increasing stability at the plastid outer envelope membranes (OEMs) periphery. Its function is as follows. Mechanochemical GTPase component of both plastid and peroxisome division machinery. Required for the last steps of plastid division specifically in mesophyll-cell, when the narrow isthmus breaks, facilitating the separation of the daughter plastids. Necessary for peroxisome activities. Seems to influence stromule (stroma-filled tubular extensions of the plastid envelope membrane) length and frequency. The chain is Dynamin-like protein ARC5 from Arabidopsis thaliana (Mouse-ear cress).